Here is a 226-residue protein sequence, read N- to C-terminus: Lipoprotein-releasing system ATP-binding protein LolD 1 (226 aa).

The 221-residue stretch at 5–225 folds into the ABC transporter domain; the sequence is LKLDGIRKSY…IVRVVDGKIA (221 aa). Position 42–49 (42–49) interacts with ATP; it reads GPSGSGKS.

Belongs to the ABC transporter superfamily. Lipoprotein translocase (TC 3.A.1.125) family. In terms of assembly, the complex is composed of two ATP-binding proteins (LolD) and two transmembrane proteins (LolC and LolE).

It is found in the cell inner membrane. In terms of biological role, part of the ABC transporter complex LolCDE involved in the translocation of mature outer membrane-directed lipoproteins, from the inner membrane to the periplasmic chaperone, LolA. Responsible for the formation of the LolA-lipoprotein complex in an ATP-dependent manner. The chain is Lipoprotein-releasing system ATP-binding protein LolD 1 from Rhodopseudomonas palustris (strain ATCC BAA-98 / CGA009).